The sequence spans 490 residues: Ribosomal L1 domain-containing protein 1 (490 aa).

N-acetylmethionine is present on Met1. The span at 1-27 (MEDSASASLSSAAATGTSTSTPAAPTA) shows a compositional bias: low complexity. Residues 1-33 (MEDSASASLSSAAATGTSTSTPAAPTARKQLDK) are disordered. Residues Lys120 and Lys254 each participate in a glycyl lysine isopeptide (Lys-Gly) (interchain with G-Cter in SUMO2) cross-link. The segment covering 280–293 (LNKKKKEARRKRRE) has biased composition (basic residues). Residues 280 to 313 (LNKKKKEARRKRRERNFEKQKERKKKRQQARKTA) are a coiled coil. The disordered stretch occupies residues 280 to 490 (LNKKKKEARR…PKKPKVPQST (211 aa)). A compositionally biased stretch (basic and acidic residues) spans 329-343 (TVKKPESKKEQTPEH). At Thr340 the chain carries Phosphothreonine. The segment covering 344 to 353 (GKKKRGRGKA) has biased composition (basic residues). The residue at position 358 (Thr358) is a Phosphothreonine. Ser361 is modified (phosphoserine). Residue Thr375 is modified to Phosphothreonine. Residues 376–385 (PANEKVEIQK) show a composition bias toward basic and acidic residues. Lys380 is covalently cross-linked (Glycyl lysine isopeptide (Lys-Gly) (interchain with G-Cter in SUMO2)). Phosphoserine occurs at positions 392 and 396. A phosphothreonine mark is found at Thr415 and Thr423. Residue Ser427 is modified to Phosphoserine. Over residues 427 to 460 (SPEKKPKIKEEAVKEKSPSLGKKDARQTPKKPEA) the composition is skewed to basic and acidic residues. A Glycyl lysine isopeptide (Lys-Gly) (interchain with G-Cter in SUMO2) cross-link involves residue Lys435. Ser443 is subject to Phosphoserine. Residue Lys461 forms a Glycyl lysine isopeptide (Lys-Gly) (interchain with G-Cter in SUMO2) linkage. Residue Thr465 is modified to Phosphothreonine. Lys468 is subject to N6-acetyllysine. Phosphoserine is present on Ser469. Basic residues predominate over residues 469 to 490 (SVRKASHTPKKWPKKPKVPQST).

Belongs to the universal ribosomal protein uL1 family. Highly divergent. In terms of assembly, interacts with ING1 (isoform 2). Interacts with KPNA7 and KPNA2. As to expression, expressed at high intensities in the heart, skeletal muscle, and placenta.

Its subcellular location is the nucleus. The protein localises to the nucleolus. Functionally, regulates cellular senescence through inhibition of PTEN translation. Acts as a pro-apoptotic regulator in response to DNA damage. The chain is Ribosomal L1 domain-containing protein 1 (RSL1D1) from Homo sapiens (Human).